The following is a 122-amino-acid chain: MIQSQTYLNIADNSGARKIMCIRVLGASNRKCAHIGDVIIAIIKEAVPNMPLEKSEVVRAVVIRTCKEFERDNGMMIRSDDNAAVVIDQEGNPKGTRVFGPVAQELRQLNFTKIVSLAPEVL.

This sequence belongs to the universal ribosomal protein uL14 family. As to quaternary structure, part of the 50S ribosomal subunit.

It is found in the plastid. Its subcellular location is the chloroplast. Binds to 23S rRNA. This is Large ribosomal subunit protein uL14c from Pinus koraiensis (Korean pine).